The chain runs to 161 residues: Phosphopantetheine adenylyltransferase (161 aa).

Serine 11 is a binding site for substrate. Residues 11–12 (SF) and histidine 19 contribute to the ATP site. 3 residues coordinate substrate: lysine 43, leucine 75, and arginine 89. Residues 90–92 (GLR), glutamate 100, and 125–131 (YSFISSS) each bind ATP.

The protein belongs to the bacterial CoaD family. In terms of assembly, homohexamer. The cofactor is Mg(2+).

Its subcellular location is the cytoplasm. It carries out the reaction (R)-4'-phosphopantetheine + ATP + H(+) = 3'-dephospho-CoA + diphosphate. Its pathway is cofactor biosynthesis; coenzyme A biosynthesis; CoA from (R)-pantothenate: step 4/5. Functionally, reversibly transfers an adenylyl group from ATP to 4'-phosphopantetheine, yielding dephospho-CoA (dPCoA) and pyrophosphate. The sequence is that of Phosphopantetheine adenylyltransferase from Staphylococcus haemolyticus (strain JCSC1435).